We begin with the raw amino-acid sequence, 732 residues long: Integrator complex subunit 13 (732 aa).

Positions 564 to 648 are enriched in basic and acidic residues; sequence PPEEEERKKR…DETPHMEKSK (85 aa). Residues 564-650 are disordered; it reads PPEEEERKKR…TPHMEKSKGP (87 aa). The short motif at 572-582 is the Nuclear localization signal (NLS) element; it reads KRGRKREDRED. Residue lysine 611 forms a Glycyl lysine isopeptide (Lys-Gly) (interchain with G-Cter in SUMO2) linkage. Residues serine 623, serine 626, and serine 678 each carry the phosphoserine modification. The interval 649–694 is cleavage module binding motif (CMBM); sequence GPVSLLSLWSNRINTANSRKHQEFAGRLNSVNNRAELYQHLKEENG.

It belongs to the Integrator subunit 13 family. As to quaternary structure, component of the Integrator complex, composed of core subunits INTS1, INTS2, INTS3, INTS4, INTS5, INTS6, INTS7, INTS8, INTS9/RC74, INTS10, INTS11/CPSF3L, INTS12, INTS13, INTS14 and INTS15. The core complex associates with protein phosphatase 2A subunits PPP2CA and PPP2R1A, to form the Integrator-PP2A (INTAC) complex. INTS13 is part of the tail subcomplex, composed of INTS10, INTS13, INTS14 and INTS15. Interacts with transcription factors ZNF609 and ZNF655. Interacts with PAFAH1B1; this interaction may be required for proper recruitment of dynein complexes to the nuclear envelope at prophase.

The protein resides in the nucleus. Its subcellular location is the cytoplasm. Component of the integrator complex, a multiprotein complex that terminates RNA polymerase II (Pol II) transcription in the promoter-proximal region of genes. The integrator complex provides a quality checkpoint during transcription elongation by driving premature transcription termination of transcripts that are unfavorably configured for transcriptional elongation: the complex terminates transcription by (1) catalyzing dephosphorylation of the C-terminal domain (CTD) of Pol II subunit POLR2A/RPB1 and SUPT5H/SPT5, (2) degrading the exiting nascent RNA transcript via endonuclease activity and (3) promoting the release of Pol II from bound DNA. The integrator complex is also involved in terminating the synthesis of non-coding Pol II transcripts, such as enhancer RNAs (eRNAs), small nuclear RNAs (snRNAs), telomerase RNAs and long non-coding RNAs (lncRNAs). Within the integrator complex, INTS13 is part of the integrator tail module and acts as a platform for the recruitment of transcription factors at promoters. At prophase, mediates recruitment of cytoplasmic dynein to the nuclear envelope, a step important for proper centrosome-nucleus coupling. At G2/M phase, may be required for proper spindle formation and execution of cytokinesis. The polypeptide is Integrator complex subunit 13 (Mus musculus (Mouse)).